Here is a 164-residue protein sequence, read N- to C-terminus: MKSVITTTISAADAAGRFPSSSDLESVQGNIQRAAARLEAAEKLASNHEAVVKEAGDACFAKYSYLKNPGEAGDSQEKVNKCYRDVDHYMRLVNYCLVVGGTGPVDEWGIAGAREVYRTLNLPTSAYVASFAFARDRLCVPRDMSAQAGVEYAGNLDYIINSLC.

Cys82 and Cys139 together coordinate (2R,3E)-phycoerythrobilin.

The protein belongs to the phycobiliprotein family. As to quaternary structure, heterodimer of an alpha and a beta chain. Post-translationally, contains two covalently linked bilin chromophores.

It is found in the plastid. The protein resides in the chloroplast thylakoid membrane. Light-harvesting photosynthetic bile pigment-protein from the phycobiliprotein complex. The protein is R-phycoerythrin alpha chain (cpeA) of Porphyra purpurea (Red seaweed).